The following is a 390-amino-acid chain: UPF0229 protein OB2647 (390 aa).

A disordered region spans residues 99–121 (NASQQGQQGQGNGKKAGDQPGTD).

Belongs to the UPF0229 family.

The protein is UPF0229 protein OB2647 of Oceanobacillus iheyensis (strain DSM 14371 / CIP 107618 / JCM 11309 / KCTC 3954 / HTE831).